The sequence spans 186 residues: Imidazoleglycerol-phosphate dehydratase (186 aa).

It belongs to the imidazoleglycerol-phosphate dehydratase family.

It is found in the cytoplasm. It carries out the reaction D-erythro-1-(imidazol-4-yl)glycerol 3-phosphate = 3-(imidazol-4-yl)-2-oxopropyl phosphate + H2O. Its pathway is amino-acid biosynthesis; L-histidine biosynthesis; L-histidine from 5-phospho-alpha-D-ribose 1-diphosphate: step 6/9. The sequence is that of Imidazoleglycerol-phosphate dehydratase from Pyrobaculum aerophilum (strain ATCC 51768 / DSM 7523 / JCM 9630 / CIP 104966 / NBRC 100827 / IM2).